The primary structure comprises 196 residues: Somatotropin (196 aa).

A signal peptide spans 1–16; that stretch reads MDKVILVLLMSLGASS. At Gln17 the chain carries Pyrrolidone carboxylic acid. His35 is a Zn(2+) binding site. Cys67 and Cys169 form a disulfide bridge. Glu178 is a Zn(2+) binding site. Cys186 and Cys194 are oxidised to a cystine.

It belongs to the somatotropin/prolactin family.

It localises to the secreted. Its function is as follows. Growth hormone plays an important role in growth control and is involved in the regulation of several anabolic processes. Implicated as an osmoregulatory substance important for seawater adaptation. The chain is Somatotropin (gh) from Takifugu rubripes (Japanese pufferfish).